The following is a 342-amino-acid chain: Polygalacturonase inhibitor 1 (342 aa).

A signal peptide spans 1-29 (MTQFNIPVTMSSSLSIILVILVSLRTALS). Intrachain disulfides connect C32/C62 and C63/C72. An N-linked (GlcNAc...) asparagine glycan is attached at N64. LRR repeat units lie at residues 82–107 (NNLD…LPYL), 108–132 (NFLY…LTQL), 133–156 (HYLY…IKTL), 157–180 (VTLD…LPNL), 181–205 (GGIT…SKLF), 206–228 (TAMT…NLNL), 229–252 (AFVD…DKNT), 253–275 (KKIH…SKNL), 276–299 (NGLD…LKFL), and 300–319 (QSLN…GGNL). The N-linked (GlcNAc...) asparagine glycan is linked to N141. N303 carries an N-linked (GlcNAc...) asparagine glycan. Disulfide bonds link C310-C332 and C334-C341.

It belongs to the polygalacturonase-inhibiting protein family.

It is found in the secreted. The protein localises to the cell wall. Its subcellular location is the membrane. Functionally, inhibitor of fungal polygalacturonase. It is an important factor for plant resistance to phytopathogenic fungi. Substrate preference is polygalacturonase (PG) from A.niger &gt;&gt; PG of F.oxysporum, A.solani or B.cinerea. Not active on PG from F.moniliforme. The polypeptide is Polygalacturonase inhibitor 1 (PGIP1) (Phaseolus vulgaris (Kidney bean)).